We begin with the raw amino-acid sequence, 696 residues long: TBC1 domain family member 12 (696 aa).

The residue at position 1 (M1) is an N-acetylmethionine. Disordered regions lie at residues 1 to 59, 91 to 121, and 156 to 234; these read MMGP…PPPR, PAARGSGMTNGDSGFLLRQDRRGPEEARRRR, and CCLA…ARAR. Acidic residues predominate over residues 46 to 55; the sequence is PPEEAGEEEA. Over residues 108 to 118 the composition is skewed to basic and acidic residues; the sequence is RQDRRGPEEAR. S205 is modified (phosphoserine). The span at 209–222 shows a compositional bias: low complexity; that stretch reads LLPSAGPSAPLPAA. S236 is modified (phosphoserine). A coiled-coil region spans residues 330–373; sequence KSVEEALRHRQEYDEMVAEAKKREIKEAHKRKRIMKERFKQEES. Positions 405-613 constitute a Rab-GAP TBC domain; the sequence is GLPPSVRGKV…RVWDVFCRDG (209 aa). At S668 the chain carries Phosphoserine. Residue T669 is modified to Phosphothreonine.

In terms of assembly, interacts with RAB11A; this interaction recruits TBC1D12 to RAB11A-positive recycling endosomes.

The protein localises to the endosome. RAB11A-binding protein that plays a role in neurite outgrowth. This chain is TBC1 domain family member 12 (Tbc1d12), found in Mus musculus (Mouse).